The following is a 310-amino-acid chain: tRNA-cytidine(32) 2-sulfurtransferase (310 aa).

The PP-loop motif motif lies at 47-52 (SGGKDS). Cys122, Cys125, and Cys213 together coordinate [4Fe-4S] cluster.

The protein belongs to the TtcA family. In terms of assembly, homodimer. It depends on Mg(2+) as a cofactor. Requires [4Fe-4S] cluster as cofactor.

The protein resides in the cytoplasm. It catalyses the reaction cytidine(32) in tRNA + S-sulfanyl-L-cysteinyl-[cysteine desulfurase] + AH2 + ATP = 2-thiocytidine(32) in tRNA + L-cysteinyl-[cysteine desulfurase] + A + AMP + diphosphate + H(+). It functions in the pathway tRNA modification. In terms of biological role, catalyzes the ATP-dependent 2-thiolation of cytidine in position 32 of tRNA, to form 2-thiocytidine (s(2)C32). The sulfur atoms are provided by the cysteine/cysteine desulfurase (IscS) system. This Haemophilus influenzae (strain PittEE) protein is tRNA-cytidine(32) 2-sulfurtransferase.